Here is a 141-residue protein sequence, read N- to C-terminus: Holo-[acyl-carrier-protein] synthase (141 aa).

Residues aspartate 8 and glutamate 63 each coordinate Mg(2+).

It belongs to the P-Pant transferase superfamily. AcpS family. The cofactor is Mg(2+).

Its subcellular location is the cytoplasm. The catalysed reaction is apo-[ACP] + CoA = holo-[ACP] + adenosine 3',5'-bisphosphate + H(+). Its function is as follows. Transfers the 4'-phosphopantetheine moiety from coenzyme A to a Ser of acyl-carrier-protein. This Rhodospirillum centenum (strain ATCC 51521 / SW) protein is Holo-[acyl-carrier-protein] synthase.